Reading from the N-terminus, the 482-residue chain is NAD(+) hydrolase ThsA (482 aa).

The Deacetylase sirtuin-type domain occupies 3–281; the sequence is EHEQKIMIDR…EEITKRFRCK (279 aa). 2 residues coordinate NAD(+): Asp-112 and His-150. His-150 functions as the Proton acceptor in the catalytic mechanism. Positions 282–482 are SLOG (STALD) domain; the sequence is NVFLSGSAHE…SKIHDVIKLI (201 aa). 3'cADPR contacts are provided by Gly-287, Ser-288, Leu-324, Phe-355, Arg-373, Lys-390, Gly-407, and Glu-411.

It belongs to the soluble Thoeris ThsA family. Homotetramer in solution.

The catalysed reaction is NAD(+) + H2O = ADP-D-ribose + nicotinamide + H(+). In vivo probably activated by a cyclic ADP-D-ribose generated by ThsB (might be 3'cADPR). In terms of biological role, NAD(+) hydrolyzing component (NADase) of the Thoeris antiviral defense system, composed of ThsA and ThsB (maybe J591_1492). As purified, has NADase activity that is not activated by any tested cADPR isomers; binds 3'cADPR better than 2'cADPR. It was suggested the purified protein is already in a fully active state. Upon activation binds and hydrolyzes NAD(+), leading to cell death and inhibition of phage replication. The sequence is that of NAD(+) hydrolase ThsA from Acinetobacter baumannii (strain 532279).